Reading from the N-terminus, the 209-residue chain is NAD(P)H-quinone oxidoreductase subunit N, chloroplastic (209 aa).

The transit peptide at 1–45 (MGSRAICIQRVAPPCFEASQVKKIKTVGSFLVNTRSKRRRSTGVK) directs the protein to the chloroplast.

This sequence belongs to the NDH complex subunit N family. Part of the chloroplast NDH complex, composed of a mixture of chloroplast and nucleus encoded subunits. Component of the NDH subcomplex A, at least composed of ndhH, ndhI, ndhJ, ndhK, ndhL, ndhM, ndhN and ndhO.

It is found in the plastid. The protein resides in the chloroplast thylakoid membrane. The enzyme catalyses a plastoquinone + NADH + (n+1) H(+)(in) = a plastoquinol + NAD(+) + n H(+)(out). The catalysed reaction is a plastoquinone + NADPH + (n+1) H(+)(in) = a plastoquinol + NADP(+) + n H(+)(out). In terms of biological role, NDH shuttles electrons from NAD(P)H:plastoquinone, via FMN and iron-sulfur (Fe-S) centers, to quinones in the photosynthetic chain and possibly in a chloroplast respiratory chain. The immediate electron acceptor for the enzyme in this species is believed to be plastoquinone. Couples the redox reaction to proton translocation, and thus conserves the redox energy in a proton gradient. The polypeptide is NAD(P)H-quinone oxidoreductase subunit N, chloroplastic (Arabidopsis thaliana (Mouse-ear cress)).